The following is a 299-amino-acid chain: Quinolinate synthase (299 aa).

Residues histidine 21 and serine 38 each contribute to the iminosuccinate site. Cysteine 83 is a [4Fe-4S] cluster binding site. Iminosuccinate contacts are provided by residues 109–111 (YVN) and serine 126. Position 170 (cysteine 170) interacts with [4Fe-4S] cluster. Iminosuccinate contacts are provided by residues 196-198 (HPE) and threonine 213. Cysteine 256 is a [4Fe-4S] cluster binding site.

Belongs to the quinolinate synthase family. Type 2 subfamily. [4Fe-4S] cluster serves as cofactor.

The protein localises to the cytoplasm. It catalyses the reaction iminosuccinate + dihydroxyacetone phosphate = quinolinate + phosphate + 2 H2O + H(+). It functions in the pathway cofactor biosynthesis; NAD(+) biosynthesis; quinolinate from iminoaspartate: step 1/1. Its function is as follows. Catalyzes the condensation of iminoaspartate with dihydroxyacetone phosphate to form quinolinate. This chain is Quinolinate synthase, found in Pyrococcus abyssi (strain GE5 / Orsay).